A 356-amino-acid polypeptide reads, in one-letter code: 3-dehydroquinate synthase (356 aa).

NAD(+) contacts are provided by residues 71–76 (EGEASK), 105–109 (GVTGD), 129–130 (TS), Lys-142, and Lys-151. Residues Glu-184, His-247, and His-264 each coordinate Zn(2+).

The protein belongs to the sugar phosphate cyclases superfamily. Dehydroquinate synthase family. Co(2+) is required as a cofactor. It depends on Zn(2+) as a cofactor. The cofactor is NAD(+).

The protein resides in the cytoplasm. The enzyme catalyses 7-phospho-2-dehydro-3-deoxy-D-arabino-heptonate = 3-dehydroquinate + phosphate. Its pathway is metabolic intermediate biosynthesis; chorismate biosynthesis; chorismate from D-erythrose 4-phosphate and phosphoenolpyruvate: step 2/7. Its function is as follows. Catalyzes the conversion of 3-deoxy-D-arabino-heptulosonate 7-phosphate (DAHP) to dehydroquinate (DHQ). In Lactococcus lactis subsp. cremoris (strain SK11), this protein is 3-dehydroquinate synthase.